We begin with the raw amino-acid sequence, 555 residues long: Formate--tetrahydrofolate ligase (555 aa).

Threonine 64–threonine 71 serves as a coordination point for ATP.

Belongs to the formate--tetrahydrofolate ligase family.

The enzyme catalyses (6S)-5,6,7,8-tetrahydrofolate + formate + ATP = (6R)-10-formyltetrahydrofolate + ADP + phosphate. It participates in one-carbon metabolism; tetrahydrofolate interconversion. In Allorhizobium ampelinum (strain ATCC BAA-846 / DSM 112012 / S4) (Agrobacterium vitis (strain S4)), this protein is Formate--tetrahydrofolate ligase.